The primary structure comprises 159 residues: NADH-quinone oxidoreductase subunit I (159 aa).

2 consecutive 4Fe-4S ferredoxin-type domains span residues 51-80 (RRYENGEERCIACKLCEAICPAQAIVIEAD) and 90-119 (TRYDIDMTKCIYCGLCQEACPVDAIVEGPN). Residues Cys-60, Cys-63, Cys-66, Cys-70, Cys-99, Cys-102, Cys-105, and Cys-109 each coordinate [4Fe-4S] cluster.

The protein belongs to the complex I 23 kDa subunit family. NDH-1 is composed of 14 different subunits. Subunits NuoA, H, J, K, L, M, N constitute the membrane sector of the complex. Requires [4Fe-4S] cluster as cofactor.

Its subcellular location is the cell inner membrane. It carries out the reaction a quinone + NADH + 5 H(+)(in) = a quinol + NAD(+) + 4 H(+)(out). Its function is as follows. NDH-1 shuttles electrons from NADH, via FMN and iron-sulfur (Fe-S) centers, to quinones in the respiratory chain. The immediate electron acceptor for the enzyme in this species is believed to be ubiquinone. Couples the redox reaction to proton translocation (for every two electrons transferred, four hydrogen ions are translocated across the cytoplasmic membrane), and thus conserves the redox energy in a proton gradient. In Rickettsia felis (strain ATCC VR-1525 / URRWXCal2) (Rickettsia azadi), this protein is NADH-quinone oxidoreductase subunit I.